Reading from the N-terminus, the 505-residue chain is Probable folylpolyglutamate synthase (505 aa).

Position 89-92 (89-92 (GKGS)) interacts with ATP. Serine 121, glutamate 190, and histidine 218 together coordinate Mg(2+). ATP is bound by residues arginine 332 and aspartate 346.

This sequence belongs to the folylpolyglutamate synthase family. A monovalent cation is required as a cofactor.

It localises to the mitochondrion inner membrane. It is found in the mitochondrion matrix. Its subcellular location is the cytoplasm. The enzyme catalyses (6S)-5,6,7,8-tetrahydrofolyl-(gamma-L-Glu)(n) + L-glutamate + ATP = (6S)-5,6,7,8-tetrahydrofolyl-(gamma-L-Glu)(n+1) + ADP + phosphate + H(+). It functions in the pathway cofactor biosynthesis; tetrahydrofolylpolyglutamate biosynthesis. Functionally, catalyzes conversion of folates to polyglutamate derivatives allowing concentration of folate compounds in the cell and the intracellular retention of these cofactors, which are important substrates for most of the folate-dependent enzymes that are involved in one-carbon transfer reactions involved in purine, pyrimidine and amino acid synthesis. This chain is Probable folylpolyglutamate synthase (met7), found in Schizosaccharomyces pombe (strain 972 / ATCC 24843) (Fission yeast).